The following is a 184-amino-acid chain: Elongation factor P (184 aa).

It belongs to the elongation factor P family.

The protein resides in the cytoplasm. Its pathway is protein biosynthesis; polypeptide chain elongation. Its function is as follows. Involved in peptide bond synthesis. Stimulates efficient translation and peptide-bond synthesis on native or reconstituted 70S ribosomes in vitro. Probably functions indirectly by altering the affinity of the ribosome for aminoacyl-tRNA, thus increasing their reactivity as acceptors for peptidyl transferase. The sequence is that of Elongation factor P from Paracidovorax citrulli (strain AAC00-1) (Acidovorax citrulli).